The chain runs to 468 residues: UDP-N-acetylmuramate--L-alanine ligase (468 aa).

114 to 120 (GTHGKTT) is a binding site for ATP.

Belongs to the MurCDEF family.

It localises to the cytoplasm. The enzyme catalyses UDP-N-acetyl-alpha-D-muramate + L-alanine + ATP = UDP-N-acetyl-alpha-D-muramoyl-L-alanine + ADP + phosphate + H(+). Its pathway is cell wall biogenesis; peptidoglycan biosynthesis. Its function is as follows. Cell wall formation. This chain is UDP-N-acetylmuramate--L-alanine ligase, found in Methylocella silvestris (strain DSM 15510 / CIP 108128 / LMG 27833 / NCIMB 13906 / BL2).